Reading from the N-terminus, the 47-residue chain is MKKITWIILLLLAAIILAACQANYIHDVQGGTVSPSSSAELTGLATQ.

The N-terminal stretch at 1–19 (MKKITWIILLLLAAIILAA) is a signal peptide. Cys-20 carries the N-palmitoyl cysteine lipid modification. Residue Cys-20 is the site of S-diacylglycerol cysteine attachment.

The protein resides in the cell outer membrane. Lysis proteins are required for both colicin release and partial cell lysis. This chain is Lysis protein for colicin E5 (lys), found in Escherichia coli.